Here is a 231-residue protein sequence, read N- to C-terminus: MGPVALPTWLQPRYRKNAYLFIYYLIQFCGHSWIFTNMTVRFFSFGKDSMVDTFYAIGLVMQLCQSISLLELLHIYVGIESNHLLPRILQLTERIIVLFMVITSQEEVQEKYVVCVLFIFRNLLDMVRYTYSMLSVIGISYAVLTWFSQTLWMPIYPLCVLAEAFTIYQSLPYFESFGTYSTKLPFDLSFYFPYVLKIYLMMLFVGMYFTYNHLYSERRDILRVFPNKKKM.

Topologically, residues 1–19 (MGPVALPTWLQPRYRKNAY) are cytoplasmic. Residues 20 to 40 (LFIYYLIQFCGHSWIFTNMTV) form a helical membrane-spanning segment. Residues 41–56 (RFFSFGKDSMVDTFYA) are Lumenal-facing. The chain crosses the membrane as a helical span at residues 57 to 77 (IGLVMQLCQSISLLELLHIYV). Residues 78-112 (GIESNHLLPRILQLTERIIVLFMVITSQEEVQEKY) are Cytoplasmic-facing. A helical membrane pass occupies residues 113–133 (VVCVLFIFRNLLDMVRYTYSM). At 134–135 (LS) the chain is on the lumenal side. A helical transmembrane segment spans residues 136 to 156 (VIGISYAVLTWFSQTLWMPIY). Residue tyrosine 156 is part of the active site. Residue proline 157 is a topological domain, cytoplasmic. Residues 158-178 (LCVLAEAFTIYQSLPYFESFG) form a helical membrane-spanning segment. Glutamate 163 is a catalytic residue. At 179–189 (TYSTKLPFDLS) the chain is on the lumenal side. A helical membrane pass occupies residues 190–210 (FYFPYVLKIYLMMLFVGMYFT). Residues 211 to 231 (YNHLYSERRDILRVFPNKKKM) lie on the Cytoplasmic side of the membrane.

The protein belongs to the very long-chain fatty acids dehydratase HACD family. In terms of assembly, may interact with enzymes of the ELO family (including ELOVL1); with those enzymes that mediate condensation, the first of the four steps of the reaction cycle responsible for fatty acids elongation, may be part of a larger fatty acids elongase complex.

Its subcellular location is the endoplasmic reticulum membrane. The enzyme catalyses a very-long-chain (3R)-3-hydroxyacyl-CoA = a very-long-chain (2E)-enoyl-CoA + H2O. It carries out the reaction (3R)-hydroxyhexadecanoyl-CoA = (2E)-hexadecenoyl-CoA + H2O. It participates in lipid metabolism; fatty acid biosynthesis. Its function is as follows. Catalyzes the third of the four reactions of the long-chain fatty acids elongation cycle. This endoplasmic reticulum-bound enzymatic process, allows the addition of two carbons to the chain of long- and very long-chain fatty acids/VLCFAs per cycle. This enzyme catalyzes the dehydration of the 3-hydroxyacyl-CoA intermediate into trans-2,3-enoyl-CoA, within each cycle of fatty acid elongation. Thereby, it participates in the production of VLCFAs of different chain lengths that are involved in multiple biological processes as precursors of membrane lipids and lipid mediators. In Bos taurus (Bovine), this protein is Very-long-chain (3R)-3-hydroxyacyl-CoA dehydratase 4.